A 213-amino-acid chain; its full sequence is Octanoyltransferase (213 aa).

One can recognise a BPL/LPL catalytic domain in the interval 32–207 (ESTLDEIWLV…NILALLNNPD (176 aa)). Residues 71 to 78 (RGGQVTYH), 138 to 140 (SLG), and 151 to 153 (GLA) contribute to the substrate site. Catalysis depends on Cys-169, which acts as the Acyl-thioester intermediate.

The protein belongs to the LipB family.

Its subcellular location is the cytoplasm. It carries out the reaction octanoyl-[ACP] + L-lysyl-[protein] = N(6)-octanoyl-L-lysyl-[protein] + holo-[ACP] + H(+). It participates in protein modification; protein lipoylation via endogenous pathway; protein N(6)-(lipoyl)lysine from octanoyl-[acyl-carrier-protein]: step 1/2. In terms of biological role, catalyzes the transfer of endogenously produced octanoic acid from octanoyl-acyl-carrier-protein onto the lipoyl domains of lipoate-dependent enzymes. Lipoyl-ACP can also act as a substrate although octanoyl-ACP is likely to be the physiological substrate. In Escherichia coli (strain SMS-3-5 / SECEC), this protein is Octanoyltransferase.